A 183-amino-acid chain; its full sequence is MKLLCLVAVVGCLLVPPAQANKSSEDIRCKCICPPYRNISGHIYNQNVSQKDCNCLHVVEPMPVPGHDVEAYCLLCECRYEERSTTTIKVIIVIYLSVVGALLLYMAFLMLVDPLIRKPDAYTEQLHNEEENEDARTMATAAASIGGPRANTVLERVEGAQQRWKLQVQEQRKTVFDRHKMLS.

The N-terminal stretch at 1–20 (MKLLCLVAVVGCLLVPPAQA) is a signal peptide. N-linked (GlcNAc...) asparagine glycosylation is found at Asn-21, Asn-38, and Asn-47. Residues 21–89 (NKSSEDIRCK…YEERSTTTIK (69 aa)) lie on the Extracellular side of the membrane. Residues 90–110 (VIIVIYLSVVGALLLYMAFLM) traverse the membrane as a helical segment. Over 111–183 (LVDPLIRKPD…TVFDRHKMLS (73 aa)) the chain is Cytoplasmic. Position 144 is a phosphoserine (Ser-144).

Belongs to the TMEM9 family. In terms of assembly, interacts with the v-ATPase accessory protein ATP6AP2 and with the v-ATPase complex subunit ATP6V0D1; these interactions lead to the assembly of the v-ATPase complex. Post-translationally, N-glycosylated. In terms of tissue distribution, expressed in heart, lung, kidney, liver and intestines. Enriched in the hepatocytes around the central vein.

It is found in the lysosome membrane. The protein resides in the late endosome membrane. The protein localises to the endosome. It localises to the multivesicular body membrane. In terms of biological role, transmembrane protein that binds to and facilitates the assembly of lysosomal proton-transporting V-type ATPase (v-ATPase), resulting in enhanced lysosomal acidification and trafficking. By bringing the v-ATPase accessory protein ATP6AP2 and the v-ATPase subunit ATP6V0D1 together, allows v-ATPase complex formation and activation. TMEM9-controlled vesicular acidification induces hyperactivation of Wnt/beta-catenin signaling, involved in development, tissue homeostasis and tissue regeneration, through lysosomal degradation of adenomatous polyposis coli/APC. In the liver, involved in hepatic regeneration. The sequence is that of Proton-transporting V-type ATPase complex assembly regulator TMEM9 from Mus musculus (Mouse).